The chain runs to 379 residues: NADH-quinone oxidoreductase subunit D 2 (379 aa).

The protein belongs to the complex I 49 kDa subunit family. NDH-1 is composed of 14 different subunits. Subunits NuoB, C, D, E, F, and G constitute the peripheral sector of the complex.

Its subcellular location is the cell inner membrane. The catalysed reaction is a quinone + NADH + 5 H(+)(in) = a quinol + NAD(+) + 4 H(+)(out). Its function is as follows. NDH-1 shuttles electrons from NADH, via FMN and iron-sulfur (Fe-S) centers, to quinones in the respiratory chain. The immediate electron acceptor for the enzyme in this species is believed to be ubiquinone. Couples the redox reaction to proton translocation (for every two electrons transferred, four hydrogen ions are translocated across the cytoplasmic membrane), and thus conserves the redox energy in a proton gradient. The protein is NADH-quinone oxidoreductase subunit D 2 of Anaeromyxobacter dehalogenans (strain 2CP-C).